Consider the following 255-residue polypeptide: H-2 class II histocompatibility antigen, E-K alpha chain (255 aa).

The first 25 residues, 1–25 (MATIGALVLRFFFIAVLMSSQKSWA), serve as a signal peptide directing secretion. Positions 26-109 (IKEEHTIIQA…ERSNNTPDAN (84 aa)) are alpha-1. The Extracellular segment spans residues 26-216 (IKEEHTIIQA…EKTLLPETKE (191 aa)). Residues 110–203 (VAPEVTVLSR…GLEEPLRKHW (94 aa)) form an alpha-2 region. The Ig-like C1-type domain occupies 112–204 (PEVTVLSRSP…LEEPLRKHWE (93 aa)). Residues Cys-132 and Cys-188 are joined by a disulfide bond. Residue Asn-143 is glycosylated (N-linked (GlcNAc...) asparagine). A connecting peptide region spans residues 204–216 (EFEEKTLLPETKE). The chain crosses the membrane as a helical span at residues 217–242 (NVVCALGLFVGLVGIVVGIILIMKGI). The Cytoplasmic portion of the chain corresponds to 243–255 (KKRNVVERRQGAL).

Belongs to the MHC class II family.

The protein localises to the membrane. The polypeptide is H-2 class II histocompatibility antigen, E-K alpha chain (Mus musculus (Mouse)).